The chain runs to 503 residues: Putative (R)-citramalate synthase CimA (503 aa).

The region spanning 9–257 is the Pyruvate carboxyltransferase domain; the sequence is IRFFDTTLRD…DTGIATEELY (249 aa).

Belongs to the alpha-IPM synthase/homocitrate synthase family. Homodimer.

It carries out the reaction pyruvate + acetyl-CoA + H2O = (3R)-citramalate + CoA + H(+). It functions in the pathway amino-acid biosynthesis; L-isoleucine biosynthesis; 2-oxobutanoate from pyruvate: step 1/3. Its function is as follows. Catalyzes the condensation of pyruvate and acetyl-coenzyme A to form (R)-citramalate. The polypeptide is Putative (R)-citramalate synthase CimA (Methanoculleus marisnigri (strain ATCC 35101 / DSM 1498 / JR1)).